Reading from the N-terminus, the 527-residue chain is Peptide chain release factor 3 (527 aa).

One can recognise a tr-type G domain in the interval 9-277; the sequence is AKRRTFAIIS…CIVDWAPQPL (269 aa). Residues 18–25, 86–90, and 140–143 each bind GTP; these read SHPDAGKT, DTPGH, and NKLD.

Belongs to the TRAFAC class translation factor GTPase superfamily. Classic translation factor GTPase family. PrfC subfamily.

The protein resides in the cytoplasm. Increases the formation of ribosomal termination complexes and stimulates activities of RF-1 and RF-2. It binds guanine nucleotides and has strong preference for UGA stop codons. It may interact directly with the ribosome. The stimulation of RF-1 and RF-2 is significantly reduced by GTP and GDP, but not by GMP. The protein is Peptide chain release factor 3 of Pseudomonas paraeruginosa (strain DSM 24068 / PA7) (Pseudomonas aeruginosa (strain PA7)).